A 274-amino-acid chain; its full sequence is Phosphate import ATP-binding protein PstB (274 aa).

The segment covering 1–11 has biased composition (polar residues); that stretch reads MSEISIATSVP. The disordered stretch occupies residues 1-21; that stretch reads MSEISIATSVPSGPGPLIGNQ. Residues 28–269 form the ABC transporter domain; it reads VIVRDLNFYY…PNDRRTQDYI (242 aa). 60–67 serves as a coordination point for ATP; that stretch reads GPSGCGKS.

The protein belongs to the ABC transporter superfamily. Phosphate importer (TC 3.A.1.7) family. As to quaternary structure, the complex is composed of two ATP-binding proteins (PstB), two transmembrane proteins (PstC and PstA) and a solute-binding protein (PstS).

Its subcellular location is the cell inner membrane. The catalysed reaction is phosphate(out) + ATP + H2O = ADP + 2 phosphate(in) + H(+). Functionally, part of the ABC transporter complex PstSACB involved in phosphate import. Responsible for energy coupling to the transport system. This chain is Phosphate import ATP-binding protein PstB, found in Rhodopseudomonas palustris (strain BisB5).